Consider the following 905-residue polypeptide: MELSLQGSLFGAPEPTVNAPNTRPSTGDLPNPFNSDHNLSDADLSKDALARPRRRNETSGSTPTAGVDPDDRADETRDDTTSTDEPAWGHHSQLKPEQLTPVLRHYVELKMAHPERVLLYRLGDFFECFFEDAITLSRELELTLTGKDAGKAIGRVPMAGIPHHAAERHCSDLIRLGYSVALCDQLETTPTKGALLKRDITRVLTPGTVLEEGMLTARRNNWLAAVVVEPATQHQPFRWGLAQADVSTGDVQVLQREGSDGLHQHLARLQASELLWSGDDPAPAWCPDRVGLTPMSSTPFSRPEAEAVLLEHYNLASLDGIGLPEVPLALQAIGGLLQYVGDTQPLEDNARVPLDVPAIVHNGDSLVLDAQTRRNLELTATQRDGLLQGSLLWAIDRTLTAMGGRCLRRWIEAPLMDRSAIQQRQTVVSRLVEKRPLRQTLRRLLRPMGDLERLAGRAGAGHAGARDLVAIADGLERLPQLAAQLNGQLTDGPAWLQALFDPQPQLQELATTVSNTLKEAPPLSLSEGGFIHDGVDPLLDGLRNQLDDQDAWLAQQERQERQGSGISTLRLQHHRTFGYFLAVSKAKTSSVPDHWIRRQTLANEERFITPELKEREGHIFQLRARACQREYELFVQLREQVGLMATSIREAARAVAGLDALTGLADVAATSNFCAPELTNNRELTLSAARHPVVEQLLVETPFTPNDVALGNGRDLVVLTGPNASGKSCYLRQIGLIQLLAQVGSWVPAKEAKIGIADRIFTRVGAVDDLAAGQSTFMVEMAETANILHHATSRSLVLLDEIGRGTATFDGLSIAWAVSEHLAGDLKARTVFATHYHELNALAGERDNVANFQVMVEETGDNLLFLHQVRPGGASRSYGIEAARLAGVPMAVVQRAQQVLDQLGD.

A disordered region spans residues 1–95 (MELSLQGSLF…PAWGHHSQLK (95 aa)). Over residues 38–50 (NLSDADLSKDALA) the composition is skewed to basic and acidic residues. 721-728 (GPNASGKS) contributes to the ATP binding site.

Belongs to the DNA mismatch repair MutS family.

In terms of biological role, this protein is involved in the repair of mismatches in DNA. It is possible that it carries out the mismatch recognition step. This protein has a weak ATPase activity. This Synechococcus sp. (strain CC9902) protein is DNA mismatch repair protein MutS.